A 316-amino-acid polypeptide reads, in one-letter code: Olfactory receptor 2AG2 (316 aa).

Over 1–30 the chain is Extracellular; the sequence is MELRNSTLGSGFILVGILNDSGSPELLYAT. Residues asparagine 5 and asparagine 19 are each glycosylated (N-linked (GlcNAc...) asparagine). Residues 31–51 traverse the membrane as a helical segment; that stretch reads FTILYMLALTSNGLLLLAITI. The Cytoplasmic segment spans residues 52-56; it reads EARLH. A helical transmembrane segment spans residues 57-77; the sequence is MPMYLLLGQLSLMDLLFTSVV. The Extracellular portion of the chain corresponds to 78-97; that stretch reads TPKALADFLRRENTISFGGC. Cysteines 97 and 179 form a disulfide. Residues 98 to 118 form a helical membrane-spanning segment; it reads ALQMFLALTMGSAEDLLLAFM. Residues 119-139 lie on the Cytoplasmic side of the membrane; that stretch reads AYDRYVAICHPLKYMTLMSPR. Residues 140–160 traverse the membrane as a helical segment; the sequence is VCWIMVATSWILASLIAIGHT. Topologically, residues 161–205 are extracellular; the sequence is MYTMHLPFCVSWEIRHLLCEIPPLLKLACADTSRYELIIYVTGVT. Residues 206-226 traverse the membrane as a helical segment; the sequence is FLLLPISAIVASYTLVLFTVL. Residues 227 to 244 lie on the Cytoplasmic side of the membrane; that stretch reads RMPSNEGRKKALVTCSSH. Residues 245 to 265 traverse the membrane as a helical segment; the sequence is LIVVGMFYGAATFMYVLPSSF. Topologically, residues 266–271 are extracellular; that stretch reads HSPKQD. A helical transmembrane segment spans residues 272-292; the sequence is NIISVFYTIVTPALNPLIYSL. The Cytoplasmic portion of the chain corresponds to 293–316; that stretch reads RNKEVMRALRRVLGKYILLAHSTL.

This sequence belongs to the G-protein coupled receptor 1 family.

The protein localises to the cell membrane. Functionally, odorant receptor. This chain is Olfactory receptor 2AG2 (OR2AG2), found in Homo sapiens (Human).